We begin with the raw amino-acid sequence, 425 residues long: MQITLIGVHQRNTPVTVRERLAFNLYELPDALLALRRYVDEGIILSTCNRVEVCAVTRNGVAGDEALKTFLVEQRGVDQALFAPSLYVYHNEAVVRHLYRLAAGLDSMVLGEDQIVGQVKEALAIAHAAGAIGPVLHRVLHGALAAGKRARTHTGIATGHVSVVSVAIDAMRQYPDLLKRGRALVIGAGHIAELSLKHLLAGGCSAITIVNRTEARADALAQRYGVAWRPWSDLEDALAASDIVVSCTSAPGIVLSQQMVERAAAGRSTPLLLFDLAVPRDIDQGVAEIPGVYLHDVDALEPICRTNRALRAAEAERAETIIEGEVAKFMEWWAVQQAVPTIRALRKRAEDIRDAEIRRALARCPELSPQQRETVIALSTAIINKLLHEPIVALRDPEASGELLTAVRRLFNIDDTAVYTSANMT.

Substrate is bound by residues 47 to 50 (TCNR), Ser107, 112 to 114 (EDQ), and Gln118. Cys48 (nucleophile) is an active-site residue. Residue 187–192 (GAGHIA) participates in NADP(+) binding.

This sequence belongs to the glutamyl-tRNA reductase family. In terms of assembly, homodimer.

It carries out the reaction (S)-4-amino-5-oxopentanoate + tRNA(Glu) + NADP(+) = L-glutamyl-tRNA(Glu) + NADPH + H(+). It functions in the pathway porphyrin-containing compound metabolism; protoporphyrin-IX biosynthesis; 5-aminolevulinate from L-glutamyl-tRNA(Glu): step 1/2. It participates in porphyrin-containing compound metabolism; chlorophyll biosynthesis. In terms of biological role, catalyzes the NADPH-dependent reduction of glutamyl-tRNA(Glu) to glutamate 1-semialdehyde (GSA). The sequence is that of Glutamyl-tRNA reductase from Roseiflexus sp. (strain RS-1).